The sequence spans 90 residues: Accessory gland-specific peptide 26Ab (90 aa).

The signal sequence occupies residues 1-21 (MNYFAVLCIFSCICLWQFSDA).

As to expression, main cells of the accessory glands of males.

Its subcellular location is the secreted. The protein localises to the extracellular space. Its function is as follows. This protein is transferred from male to female during mating and may affect egglaying and behavior after mating. This Drosophila sechellia (Fruit fly) protein is Accessory gland-specific peptide 26Ab (Acp26Ab).